The chain runs to 170 residues: MFRATAIIRADKVIDAVPAGHAVLERDERHLRRKAIVLEGGEKVLVDFAEPIVLEHGDRLVLDDGREIEIRAASEELYEIRGRDPLHIAELTWHIGNRHLAAQIESDRIFILRDHVIKAMLEGLGATVTDVTAIFSPLRGAYSGGHSHDDHDHHHGHHEHDHEHHHHHHD.

The tract at residues 144–170 (GGHSHDDHDHHHGHHEHDHEHHHHHHD) is disordered. Positions 146–162 (HSHDDHDHHHGHHEHDH) are enriched in basic and acidic residues.

It belongs to the UreE family.

Its subcellular location is the cytoplasm. In terms of biological role, involved in urease metallocenter assembly. Binds nickel. Probably functions as a nickel donor during metallocenter assembly. In Brucella anthropi (strain ATCC 49188 / DSM 6882 / CCUG 24695 / JCM 21032 / LMG 3331 / NBRC 15819 / NCTC 12168 / Alc 37) (Ochrobactrum anthropi), this protein is Urease accessory protein UreE.